A 473-amino-acid chain; its full sequence is Cardiolipin synthase C (473 aa).

2 PLD phosphodiesterase domains span residues 125–152 (LNRR…GDAY) and 364–391 (SGAS…DPRS). Catalysis depends on residues histidine 130, lysine 132, aspartate 137, histidine 369, lysine 371, and aspartate 376.

This sequence belongs to the phospholipase D family. Cardiolipin synthase subfamily. ClsC sub-subfamily.

It carries out the reaction a 1,2-diacyl-sn-glycero-3-phospho-(1'-sn-glycerol) + a 1,2-diacyl-sn-glycero-3-phosphoethanolamine = a cardiolipin + ethanolamine. Full activity requires coexpression with the neighboring gene ymdB. Its function is as follows. Catalyzes the synthesis of cardiolipin (CL) (diphosphatidylglycerol) from phosphatidylglycerol (PG) and phosphatidylethanolamine (PE). The chain is Cardiolipin synthase C from Escherichia coli (strain K12).